A 333-amino-acid polypeptide reads, in one-letter code: Phosphate acyltransferase (333 aa).

It belongs to the PlsX family. Homodimer. Probably interacts with PlsY.

It localises to the cytoplasm. It carries out the reaction a fatty acyl-[ACP] + phosphate = an acyl phosphate + holo-[ACP]. Its pathway is lipid metabolism; phospholipid metabolism. In terms of biological role, catalyzes the reversible formation of acyl-phosphate (acyl-PO(4)) from acyl-[acyl-carrier-protein] (acyl-ACP). This enzyme utilizes acyl-ACP as fatty acyl donor, but not acyl-CoA. This is Phosphate acyltransferase from Clostridium beijerinckii (strain ATCC 51743 / NCIMB 8052) (Clostridium acetobutylicum).